A 515-amino-acid chain; its full sequence is 2-isopropylmalate synthase (515 aa).

Residues 4–264 (VKIFDTTLRD…NIGINQDTTQ (261 aa)) enclose the Pyruvate carboxyltransferase domain. Residues Asp-13, His-201, His-203, and Asn-237 each coordinate Mn(2+). The regulatory domain stretch occupies residues 390 to 515 (ELDYLSVNTG…RQTTSAQEGI (126 aa)).

Belongs to the alpha-IPM synthase/homocitrate synthase family. LeuA type 1 subfamily. In terms of assembly, homodimer. It depends on Mn(2+) as a cofactor.

Its subcellular location is the cytoplasm. The catalysed reaction is 3-methyl-2-oxobutanoate + acetyl-CoA + H2O = (2S)-2-isopropylmalate + CoA + H(+). The protein operates within amino-acid biosynthesis; L-leucine biosynthesis; L-leucine from 3-methyl-2-oxobutanoate: step 1/4. Its function is as follows. Catalyzes the condensation of the acetyl group of acetyl-CoA with 3-methyl-2-oxobutanoate (2-ketoisovalerate) to form 3-carboxy-3-hydroxy-4-methylpentanoate (2-isopropylmalate). This is 2-isopropylmalate synthase from Halothermothrix orenii (strain H 168 / OCM 544 / DSM 9562).